The following is a 1103-amino-acid chain: DNA polymerase delta catalytic subunit (1103 aa).

Residues 1–29 (MDFKRRQGPGPGVPPKRARGGLWDEDEPS) form a disordered region. The Nuclear localization signal signature appears at 4–19 (KRRQGPGPGVPPKRAR). R19 bears the Omega-N-methylarginine mark. Residue K570 forms a Glycyl lysine isopeptide (Lys-Gly) (interchain with G-Cter in SUMO2) linkage. Zn(2+) is bound by residues C1008, C1011, C1022, and C1025. The segment at 1008 to 1025 (CIGCRSVINHQGAVCEFC) adopts a CysA-type zinc-finger fold. [4Fe-4S] cluster contacts are provided by C1054, C1057, C1067, and C1072. A CysB motif motif is present at residues 1054–1072 (CQRCQGSLHEDVICTSRDC).

Belongs to the DNA polymerase type-B family. Component of the tetrameric DNA polymerase delta complex (Pol-delta4), which consists of POLD1/p125, POLD2/p50, POLD3/p66/p68 and POLD4/p12, with POLD1 bearing both DNA polymerase and 3' to 5' proofreading exonuclease activities. Within Pol-delta4, directly interacts with POLD2 and POLD4. Following genotoxic stress by DNA-damaging agents, such as ultraviolet light and methyl methanesulfonate, or by replication stress induced by treatment with hydroxyurea or aphidicolin, Pol-delta4 is converted into a trimeric form of the complex (Pol-delta3) by POLD4 degradation. Pol-delta3 is the major form at S phase replication sites and DNA damage sites. POLD1 displays different catalytic properties depending upon the complex it is found in. It exhibits higher proofreading activity and fidelity than Pol-delta4, making it particularly well suited to respond to DNA damage. Directly interacts with PCNA, as do POLD3 and POLD4; this interaction stimulates Pol-delta4 polymerase activity. As POLD2 and POLD4, directly interacts with WRNIP1; this interaction stimulates DNA polymerase delta-mediated DNA synthesis, independently of the presence of PCNA. This stimulation may be due predominantly to an increase of initiation frequency and also to increased processivity. Also observed as a dimeric complex with POLD2 (Pol-delta2). Pol-delta2 is relatively insensitive to the PCNA stimulation (2-5-fold) compared to Pol-delta4 that is stimulated by over 50-fold. The DNA polymerase delta complex interacts with POLDIP2; this interaction is probably mediated through direct binding to POLD2. Interacts with CIAO1. Interacts with POLDIP2. Interacts with RFC1. The cofactor is [4Fe-4S] cluster.

The protein resides in the nucleus. The catalysed reaction is DNA(n) + a 2'-deoxyribonucleoside 5'-triphosphate = DNA(n+1) + diphosphate. Regulated by alteration of quaternary structure. Exhibits burst rates of DNA synthesis are about 5 times faster in the presence of POLD4 (Pol-delta4 complex) than in its absence (Pol-delta3 complex), while the affinity of the enzyme for its DNA and dNTP substrates appears unchanged. The Pol-delta3 complex is more likely to proofread DNA synthesis because it cleaves single-stranded DNA twice as fast and transfers mismatched DNA from the polymerase to the exonuclease sites 9 times faster compared to the Pol-delta3 complex. Pol-delta3 also extends mismatched primers 3 times more slowly in the absence of POLD4. The conversion of Pol-delta4 into Pol-delta3 is induced by genotoxic stress or by replication stress leading POLD4 degradation. Stimulated in the presence of PCNA. This stimulation is further increased in the presence of KCTD13/PDIP1, most probably via direct interaction between KCTD13 and POLD2. In terms of biological role, as the catalytic component of the trimeric (Pol-delta3 complex) and tetrameric DNA polymerase delta complexes (Pol-delta4 complex), plays a crucial role in high fidelity genome replication, including in lagging strand synthesis, and repair. Exhibits both DNA polymerase and 3'- to 5'-exonuclease activities. Requires the presence of accessory proteins POLD2, POLD3 and POLD4 for full activity. Depending upon the absence (Pol-delta3) or the presence of POLD4 (Pol-delta4), displays differences in catalytic activity. Most notably, expresses higher proofreading activity in the context of Pol-delta3 compared with that of Pol-delta4. Although both Pol-delta3 and Pol-delta4 process Okazaki fragments in vitro, Pol-delta3 may be better suited to fulfill this task, exhibiting near-absence of strand displacement activity compared to Pol-delta4 and stalling on encounter with the 5'-blocking oligonucleotides. Pol-delta3 idling process may avoid the formation of a gap, while maintaining a nick that can be readily ligated. Along with DNA polymerase kappa, DNA polymerase delta carries out approximately half of nucleotide excision repair (NER) synthesis following UV irradiation. Under conditions of DNA replication stress, in the presence of POLD3 and POLD4, may catalyze the repair of broken replication forks through break-induced replication (BIR). Involved in the translesion synthesis (TLS) of templates carrying O6-methylguanine, 8oxoG or abasic sites. This chain is DNA polymerase delta catalytic subunit (POLD1), found in Mesocricetus auratus (Golden hamster).